Reading from the N-terminus, the 404-residue chain is Neutral protease 2 homolog AFLA_065450 (404 aa).

Positions 1 to 19 (MRFISASSLLLALAPTLNA) are cleaved as a signal peptide. Residues 20-185 (VPVEVAGSAQ…TQAVKILERR (166 aa)) constitute a propeptide that is removed on maturation. 2 cysteine pairs are disulfide-bonded: C191-C263 and C270-C288. H313 is a binding site for Zn(2+). Residue E314 is part of the active site. Residues H317 and D328 each contribute to the Zn(2+) site.

The protein belongs to the peptidase M35 family. It depends on Zn(2+) as a cofactor.

Its subcellular location is the secreted. It carries out the reaction Preferential cleavage of bonds with hydrophobic residues in P1'. Also 3-Asn-|-Gln-4 and 8-Gly-|-Ser-9 bonds in insulin B chain.. Its function is as follows. Secreted metalloproteinase that allows assimilation of proteinaceous substrates. Shows high activities on basic nuclear substrates such as histone and protamine. This is Neutral protease 2 homolog AFLA_065450 from Aspergillus flavus (strain ATCC 200026 / FGSC A1120 / IAM 13836 / NRRL 3357 / JCM 12722 / SRRC 167).